Consider the following 179-residue polypeptide: Inorganic pyrophosphatase (179 aa).

Lys-30, Arg-44, and Tyr-56 together coordinate substrate. Residues Asp-66, Asp-71, and Asp-103 each contribute to the Mg(2+) site. Tyr-143 is a substrate binding site.

Belongs to the PPase family. Homohexamer. The cofactor is Mg(2+).

The protein resides in the cytoplasm. The catalysed reaction is diphosphate + H2O = 2 phosphate + H(+). Catalyzes the hydrolysis of inorganic pyrophosphate (PPi) forming two phosphate ions. This chain is Inorganic pyrophosphatase, found in Wigglesworthia glossinidia brevipalpis.